We begin with the raw amino-acid sequence, 330 residues long: DNA-directed RNA polymerase subunit alpha (330 aa).

The interval 1 to 237 (MYTEINEMLT…RQLHAFVDMK (237 aa)) is alpha N-terminal domain (alpha-NTD). The segment at 251-330 (FDPVLLRSVD…ENWPPASLGE (80 aa)) is alpha C-terminal domain (alpha-CTD).

The protein belongs to the RNA polymerase alpha chain family. Homodimer. The RNAP catalytic core consists of 2 alpha, 1 beta, 1 beta' and 1 omega subunit. When a sigma factor is associated with the core the holoenzyme is formed, which can initiate transcription.

The enzyme catalyses RNA(n) + a ribonucleoside 5'-triphosphate = RNA(n+1) + diphosphate. Functionally, DNA-dependent RNA polymerase catalyzes the transcription of DNA into RNA using the four ribonucleoside triphosphates as substrates. This chain is DNA-directed RNA polymerase subunit alpha, found in Legionella pneumophila (strain Paris).